The following is a 361-amino-acid chain: 3-isopropylmalate dehydrogenase (361 aa).

78–91 (GTQWDSLPRHLRPE) contributes to the NAD(+) binding site. 4 residues coordinate substrate: R98, R108, R136, and D226. Mg(2+)-binding residues include D226, D250, and D254. Residue 284-296 (GSAPDIAGQDKAN) coordinates NAD(+).

Belongs to the isocitrate and isopropylmalate dehydrogenases family. LeuB type 1 subfamily. Homodimer. The cofactor is Mg(2+). Mn(2+) is required as a cofactor.

The protein resides in the cytoplasm. The catalysed reaction is (2R,3S)-3-isopropylmalate + NAD(+) = 4-methyl-2-oxopentanoate + CO2 + NADH. It participates in amino-acid biosynthesis; L-leucine biosynthesis; L-leucine from 3-methyl-2-oxobutanoate: step 3/4. Functionally, catalyzes the oxidation of 3-carboxy-2-hydroxy-4-methylpentanoate (3-isopropylmalate) to 3-carboxy-4-methyl-2-oxopentanoate. The product decarboxylates to 4-methyl-2 oxopentanoate. The chain is 3-isopropylmalate dehydrogenase from Thermosynechococcus vestitus (strain NIES-2133 / IAM M-273 / BP-1).